The following is a 286-amino-acid chain: Probable 4-deoxy-4-formamido-L-arabinose-phosphoundecaprenol deformylase ArnD (286 aa).

The NodB homology domain maps to 1-248; it reads MGTKLGVPNL…IAINEGINFC (248 aa).

It belongs to the polysaccharide deacetylase family. ArnD deformylase subfamily.

It catalyses the reaction 4-deoxy-4-formamido-alpha-L-arabinopyranosyl di-trans,octa-cis-undecaprenyl phosphate + H2O = 4-amino-4-deoxy-alpha-L-arabinopyranosyl di-trans,octa-cis-undecaprenyl phosphate + formate. The protein operates within glycolipid biosynthesis; 4-amino-4-deoxy-alpha-L-arabinose undecaprenyl phosphate biosynthesis; 4-amino-4-deoxy-alpha-L-arabinose undecaprenyl phosphate from UDP-4-deoxy-4-formamido-beta-L-arabinose and undecaprenyl phosphate: step 2/2. It functions in the pathway bacterial outer membrane biogenesis; lipopolysaccharide biosynthesis. Catalyzes the deformylation of 4-deoxy-4-formamido-L-arabinose-phosphoundecaprenol to 4-amino-4-deoxy-L-arabinose-phosphoundecaprenol. The modified arabinose is attached to lipid A and is required for resistance to polymyxin and cationic antimicrobial peptides. This is Probable 4-deoxy-4-formamido-L-arabinose-phosphoundecaprenol deformylase ArnD from Wigglesworthia glossinidia brevipalpis.